Consider the following 200-residue polypeptide: Large ribosomal subunit protein uL4 (200 aa).

The interval 43–65 is disordered; that stretch reads RAQKTRSEVSGGGAKPWRQKGTG.

Belongs to the universal ribosomal protein uL4 family. In terms of assembly, part of the 50S ribosomal subunit.

Functionally, one of the primary rRNA binding proteins, this protein initially binds near the 5'-end of the 23S rRNA. It is important during the early stages of 50S assembly. It makes multiple contacts with different domains of the 23S rRNA in the assembled 50S subunit and ribosome. In terms of biological role, forms part of the polypeptide exit tunnel. This Aliivibrio salmonicida (strain LFI1238) (Vibrio salmonicida (strain LFI1238)) protein is Large ribosomal subunit protein uL4.